The following is a 511-amino-acid chain: Lysine--tRNA ligase (511 aa).

A disordered region spans residues Met-1–Asn-21. Residues Lys-9–Asn-21 show a composition bias toward polar residues. Glu-422 and Glu-429 together coordinate Mg(2+).

Belongs to the class-II aminoacyl-tRNA synthetase family. Homodimer. Mg(2+) serves as cofactor.

The protein localises to the cytoplasm. It catalyses the reaction tRNA(Lys) + L-lysine + ATP = L-lysyl-tRNA(Lys) + AMP + diphosphate. The chain is Lysine--tRNA ligase from Pelodictyon phaeoclathratiforme (strain DSM 5477 / BU-1).